Consider the following 222-residue polypeptide: Large ribosomal subunit protein uL4 (222 aa).

The protein belongs to the universal ribosomal protein uL4 family. Part of the 50S ribosomal subunit.

Functionally, one of the primary rRNA binding proteins, this protein initially binds near the 5'-end of the 23S rRNA. It is important during the early stages of 50S assembly. It makes multiple contacts with different domains of the 23S rRNA in the assembled 50S subunit and ribosome. In terms of biological role, forms part of the polypeptide exit tunnel. This is Large ribosomal subunit protein uL4 from Chlamydia trachomatis serovar L2 (strain ATCC VR-902B / DSM 19102 / 434/Bu).